A 428-amino-acid chain; its full sequence is Dihydroorotase (428 aa).

The Zn(2+) site is built by histidine 60 and histidine 62. Residues 62-64 (HLR) and asparagine 94 each bind substrate. Positions 152, 179, and 232 each coordinate Zn(2+). Position 278 (asparagine 278) interacts with substrate. Position 305 (aspartate 305) interacts with Zn(2+). Aspartate 305 is an active-site residue. Residue histidine 309 coordinates substrate.

The protein belongs to the metallo-dependent hydrolases superfamily. DHOase family. Class I DHOase subfamily. Zn(2+) is required as a cofactor.

The enzyme catalyses (S)-dihydroorotate + H2O = N-carbamoyl-L-aspartate + H(+). The protein operates within pyrimidine metabolism; UMP biosynthesis via de novo pathway; (S)-dihydroorotate from bicarbonate: step 3/3. Its function is as follows. Catalyzes the reversible cyclization of carbamoyl aspartate to dihydroorotate. This chain is Dihydroorotase, found in Ruminiclostridium cellulolyticum (strain ATCC 35319 / DSM 5812 / JCM 6584 / H10) (Clostridium cellulolyticum).